We begin with the raw amino-acid sequence, 321 residues long: L-carnitine dehydrogenase (321 aa).

Residue glycine 14–glycine 19 coordinates NAD(+). The important for catalytic activity stretch occupies residues methionine 317–glutamate 321.

Belongs to the 3-hydroxyacyl-CoA dehydrogenase family. L-carnitine dehydrogenase subfamily. As to quaternary structure, homodimer.

Its subcellular location is the cytoplasm. The enzyme catalyses carnitine + NAD(+) = 3-dehydrocarnitine + NADH + H(+). The protein operates within amine and polyamine metabolism; carnitine metabolism. With respect to regulation, the enzyme activity is strongly inhibited by Ag(+), Ni(+), Hg(+), and p-chloromercuribenzoate, and partially inhibited by Li(+), Ca(2+), Mn(2+), Co(2+), Cu(2+), and Zn(2+). Functionally, catalyzes the NAD(+)-dependent oxidation of L-carnitine to 3-dehydrocarnitine. Is specific for L-carnitine and NAD(+) as substrates since D-carnitine, other carnitine analogs such as choline and betaine, and NADP(+) are not substrates. Despite a high similarity to 3-hydroxyacyl-CoA dehydrogenases, cannot dehydrogenate 3-hydroxybutylate and 3-hydroxybutyl-CoA. Is probably involved in a L-carnitine degradation pathway that allows Pseudomonas sp. strain NBRC 13558 to grow on L-carnitine as the sole source of carbon and nitrogen. The protein is L-carnitine dehydrogenase of Pseudomonas sp.